The sequence spans 127 residues: Ribosome-binding factor A (127 aa).

Belongs to the RbfA family. Monomer. Binds 30S ribosomal subunits, but not 50S ribosomal subunits or 70S ribosomes.

The protein resides in the cytoplasm. One of several proteins that assist in the late maturation steps of the functional core of the 30S ribosomal subunit. Associates with free 30S ribosomal subunits (but not with 30S subunits that are part of 70S ribosomes or polysomes). Required for efficient processing of 16S rRNA. May interact with the 5'-terminal helix region of 16S rRNA. The chain is Ribosome-binding factor A from Nitrosococcus oceani (strain ATCC 19707 / BCRC 17464 / JCM 30415 / NCIMB 11848 / C-107).